Here is a 154-residue protein sequence, read N- to C-terminus: Snaclec lebecin subunit beta (154 aa).

The first 23 residues, 1-23, serve as a signal peptide directing secretion; it reads MGRIIFVSFGLLVVFLSLSGTGA. Disulfide bonds link Cys-25/Cys-36, Cys-53/Cys-150, and Cys-125/Cys-142. Positions 32-151 constitute a C-type lectin domain; sequence DEEHCYYVFF…CGDDYPFVCK (120 aa). N-linked (GlcNAc...) asparagine glycosylation is present at Asn-139.

In terms of assembly, heterodimer with the alpha subunit (AC W5XDM0); disulfide-linked. Expressed by the venom gland.

It is found in the secreted. Its function is as follows. Inhibits human breast cancer cells (MDA-MB231) migration and proliferation, as well as their adhesion to fibrinogen and fibronectin. This inhibition may be due to the binding to receptors of the integrin family, probably alpha-v/beta-3 (ITGAV/ITGB3) (40% inhibition of cell adhesion) and alpha-5/beta-1 (ITGA5/ITGB1) (by comparison with lebectin). The sequence is that of Snaclec lebecin subunit beta from Macrovipera lebetinus (Levantine viper).